The following is a 1312-amino-acid chain: Kinesin-like protein KIF16B (1312 aa).

A Kinesin motor domain is found at 3 to 358; it reads SVKVAVRVRP…LRYANRAKNI (356 aa). 102–109 serves as a coordination point for ATP; the sequence is GQTGSGKS. The stretch at 366–425 forms a coiled coil; the sequence is EDANVKLIRELRAEIARLKTLLAQGNQIALLDSPTALSMEEKLHQNEARVQELTKEWTNK. A Phosphoserine modification is found at Ser398. In terms of domain architecture, FHA spans 480 to 544; the sequence is VGREDASTEQ…LNQGAVILLG (65 aa). A Phosphothreonine modification is found at Thr577. Phosphoserine is present on residues Ser582, Ser838, Ser1047, and Ser1145. Coiled-coil stretches lie at residues 835 to 913 and 941 to 1073; these read KLAS…LQNH and QVEK…KQKI. Positions 1177 to 1291 constitute a PX domain; the sequence is DPIKISIPRY…KVGLTLSKHT (115 aa).

This sequence belongs to the TRAFAC class myosin-kinesin ATPase superfamily. Kinesin family. In terms of assembly, interacts with PTPN21. Interacts with RAB14.

The protein localises to the cytoplasm. It is found in the cytoskeleton. The protein resides in the early endosome membrane. Its subcellular location is the spindle. Its function is as follows. Plus end-directed microtubule-dependent motor protein involved in endosome transport and receptor recycling and degradation. Regulates the plus end motility of early endosomes and the balance between recycling and degradation of receptors such as EGF receptor (EGFR) and FGF receptor (FGFR). Regulates the Golgi to endosome transport of FGFR-containing vesicles during early development, a key process for developing basement membrane and epiblast and primitive endoderm lineages during early postimplantation development. In Mus musculus (Mouse), this protein is Kinesin-like protein KIF16B (Kif16b).